Consider the following 115-residue polypeptide: Large ribosomal subunit protein bL19 (115 aa).

This sequence belongs to the bacterial ribosomal protein bL19 family.

This protein is located at the 30S-50S ribosomal subunit interface and may play a role in the structure and function of the aminoacyl-tRNA binding site. The sequence is that of Large ribosomal subunit protein bL19 from Lawsonia intracellularis (strain PHE/MN1-00).